The primary structure comprises 475 residues: ATP synthase subunit beta, chloroplastic (475 aa).

ATP is bound at residue 156-163 (GGAGVGKT).

This sequence belongs to the ATPase alpha/beta chains family. In terms of assembly, F-type ATPases have 2 components, CF(1) - the catalytic core - and CF(0) - the membrane proton channel. CF(1) has five subunits: alpha(3), beta(3), gamma(1), delta(1), epsilon(1). CF(0) has four main subunits: a(1), b(1), b'(1) and c(9-12).

The protein localises to the plastid. It localises to the chloroplast thylakoid membrane. It carries out the reaction ATP + H2O + 4 H(+)(in) = ADP + phosphate + 5 H(+)(out). Its function is as follows. Produces ATP from ADP in the presence of a proton gradient across the membrane. The catalytic sites are hosted primarily by the beta subunits. This Phaeodactylum tricornutum (strain CCAP 1055/1) protein is ATP synthase subunit beta, chloroplastic.